Consider the following 86-residue polypeptide: Anti-adapter protein IraP (86 aa).

Positions 1–36 (MKNLIAELLFKLAQKEEESKELCAQVEALEIIVTAM) form a coiled coil.

This sequence belongs to the IraP family. Interacts with RssB.

It localises to the cytoplasm. In terms of biological role, inhibits RpoS proteolysis by regulating RssB activity, thereby increasing the stability of the sigma stress factor RpoS especially during phosphate starvation, but also in stationary phase and during nitrogen starvation. Its effect on RpoS stability is due to its interaction with RssB, which probably blocks the interaction of RssB with RpoS, and the consequent delivery of the RssB-RpoS complex to the ClpXP protein degradation pathway. The sequence is that of Anti-adapter protein IraP from Shigella sonnei (strain Ss046).